Here is a 1281-residue protein sequence, read N- to C-terminus: SCL-interrupting locus protein homolog (1281 aa).

Composition is skewed to polar residues over residues Val390–Ser401, Arg461–Asn475, His528–His560, Glu567–Arg592, Ser770–Gln790, and Gln891–Glu913. 4 disordered regions span residues Val390–Arg431, Lys450–Arg592, Ala765–Gln790, and Arg879–Asp915.

It is found in the cytoplasm. It localises to the cytosol. Its subcellular location is the cytoskeleton. The protein localises to the microtubule organizing center. The protein resides in the centrosome. It is found in the centriole. Its function is as follows. Plays an essential role in early embryonic development. Plays an important role in the regulation of centriole duplication. The chain is SCL-interrupting locus protein homolog (stil) from Xenopus laevis (African clawed frog).